Here is a 380-residue protein sequence, read N- to C-terminus: Cytochrome b (380 aa).

4 consecutive transmembrane segments (helical) span residues F34 to M54, W78 to I99, W114 to L134, and F179 to L199. Residues H84 and H98 each contribute to the heme b site. The heme b site is built by H183 and H197. H202 provides a ligand contact to a ubiquinone. 4 helical membrane-spanning segments follow: residues Y227–T247, L289–H309, I321–G341, and F348–P368.

Belongs to the cytochrome b family. As to quaternary structure, the cytochrome bc1 complex contains 3 respiratory subunits (MT-CYB, CYC1 and UQCRFS1), 2 core proteins (UQCRC1 and UQCRC2) and probably 6 low-molecular weight proteins. Requires heme b as cofactor.

Its subcellular location is the mitochondrion inner membrane. Component of the ubiquinol-cytochrome c reductase complex (complex III or cytochrome b-c1 complex) that is part of the mitochondrial respiratory chain. The b-c1 complex mediates electron transfer from ubiquinol to cytochrome c. Contributes to the generation of a proton gradient across the mitochondrial membrane that is then used for ATP synthesis. This is Cytochrome b (mt-cyb) from Hemitrygon laosensis (Mekong freshwater stingray).